We begin with the raw amino-acid sequence, 300 residues long: GTPase Era (300 aa).

In terms of domain architecture, Era-type G spans 6–173; the sequence is KSGFLSIIGR…VDVLKEHLPE (168 aa). The segment at 14–21 is G1; sequence GRPNVGKS. 14–21 provides a ligand contact to GTP; it reads GRPNVGKS. Residues 40–44 are G2; that stretch reads QTTRN. Positions 61 to 64 are G3; that stretch reads DTPG. GTP contacts are provided by residues 61-65 and 123-126; these read DTPGI and NKID. Residues 123-126 are G4; that stretch reads NKID. The interval 152–154 is G5; the sequence is ISA. The region spanning 204–281 is the KH type-2 domain; the sequence is TKEEVPHSIA…YLELWIKVKK (78 aa).

Belongs to the TRAFAC class TrmE-Era-EngA-EngB-Septin-like GTPase superfamily. Era GTPase family. As to quaternary structure, monomer.

The protein localises to the cytoplasm. The protein resides in the cell membrane. Its function is as follows. An essential GTPase that binds both GDP and GTP, with rapid nucleotide exchange. Plays a role in 16S rRNA processing and 30S ribosomal subunit biogenesis and possibly also in cell cycle regulation and energy metabolism. The polypeptide is GTPase Era (Oceanobacillus iheyensis (strain DSM 14371 / CIP 107618 / JCM 11309 / KCTC 3954 / HTE831)).